The sequence spans 79 residues: DNA gyrase inhibitor YacG (79 aa).

4 residues coordinate Zn(2+): Cys-7, Cys-10, Cys-26, and Cys-30.

Belongs to the DNA gyrase inhibitor YacG family. As to quaternary structure, interacts with GyrB. Zn(2+) serves as cofactor.

Inhibits all the catalytic activities of DNA gyrase by preventing its interaction with DNA. Acts by binding directly to the C-terminal domain of GyrB, which probably disrupts DNA binding by the gyrase. The protein is DNA gyrase inhibitor YacG of Shewanella pealeana (strain ATCC 700345 / ANG-SQ1).